Reading from the N-terminus, the 542-residue chain is Zinc finger protein 280A (542 aa).

Positions 66-185 (VTPGSNSRRK…RDSKRVKLRD (120 aa)) are disordered. The span at 107-122 (EGRSTDSPVTMKSSSE) shows a compositional bias: polar residues. Residues 128-143 (SSPQVVSPSSSDSLPP) are compositionally biased toward low complexity. Positions 161–185 (SSPDSKRLSTSDINSRDSKRVKLRD) are enriched in basic and acidic residues. 4 C2H2-type zinc fingers span residues 334–357 (TTCQ…DSVH), 364–387 (AVCK…KDHH), 423–445 (LLCL…CWRH), and 451–474 (LQCS…TKDH). The segment covering 499-520 (QPGSSGMASVIVSNTDPQSSPV) has biased composition (polar residues). Residues 499-542 (QPGSSGMASVIVSNTDPQSSPVKTKKKTAMNTRDSRLPCSKDSS) form a disordered region.

The protein localises to the nucleus. Functionally, may function as a transcription factor. In Homo sapiens (Human), this protein is Zinc finger protein 280A (ZNF280A).